A 161-amino-acid polypeptide reads, in one-letter code: Large ribosomal subunit protein uL11 (161 aa).

This sequence belongs to the universal ribosomal protein uL11 family. In terms of assembly, part of the ribosomal stalk of the 50S ribosomal subunit. Interacts with L10 and the large rRNA to form the base of the stalk. L10 forms an elongated spine to which L12 dimers bind in a sequential fashion forming a multimeric L10(L12)X complex.

In terms of biological role, forms part of the ribosomal stalk which helps the ribosome interact with GTP-bound translation factors. In Methanosarcina barkeri (strain Fusaro / DSM 804), this protein is Large ribosomal subunit protein uL11.